The chain runs to 376 residues: Pyrimidine monooxygenase RutA (376 aa).

FMN contacts are provided by residues 61–62, asparagine 127, glutamate 136, 152–153, and serine 202; these read IK and RY.

It belongs to the NtaA/SnaA/DszA monooxygenase family. RutA subfamily.

The enzyme catalyses uracil + FMNH2 + NADH + O2 = (Z)-3-ureidoacrylate + FMN + NAD(+) + H2O + H(+). The catalysed reaction is thymine + FMNH2 + NADH + O2 = (Z)-2-methylureidoacrylate + FMN + NAD(+) + H2O + H(+). Catalyzes the pyrimidine ring opening between N-3 and C-4 by an unusual flavin hydroperoxide-catalyzed mechanism, adding oxygen atoms in the process to yield ureidoacrylate peracid, that immediately reacts with FMN forming ureidoacrylate and FMN-N(5)-oxide. The FMN-N(5)-oxide reacts spontaneously with NADH to produce FMN. Requires the flavin reductase RutF to regenerate FMN in vivo. The sequence is that of Pyrimidine monooxygenase RutA from Methylorubrum extorquens (strain CM4 / NCIMB 13688) (Methylobacterium extorquens).